The sequence spans 211 residues: Histidine biosynthesis bifunctional protein HisIE (211 aa).

The tract at residues 1-122 (MSFKAAEVSS…DAQEESQMVW (122 aa)) is phosphoribosyl-AMP cyclohydrolase. Residues 123–211 (LHQLEQLLAA…VVNKLKERHK (89 aa)) form a phosphoribosyl-ATP pyrophosphohydrolase region.

This sequence in the N-terminal section; belongs to the PRA-CH family. In the C-terminal section; belongs to the PRA-PH family.

The protein resides in the cytoplasm. It catalyses the reaction 1-(5-phospho-beta-D-ribosyl)-ATP + H2O = 1-(5-phospho-beta-D-ribosyl)-5'-AMP + diphosphate + H(+). The enzyme catalyses 1-(5-phospho-beta-D-ribosyl)-5'-AMP + H2O = 1-(5-phospho-beta-D-ribosyl)-5-[(5-phospho-beta-D-ribosylamino)methylideneamino]imidazole-4-carboxamide. It participates in amino-acid biosynthesis; L-histidine biosynthesis; L-histidine from 5-phospho-alpha-D-ribose 1-diphosphate: step 2/9. Its pathway is amino-acid biosynthesis; L-histidine biosynthesis; L-histidine from 5-phospho-alpha-D-ribose 1-diphosphate: step 3/9. This is Histidine biosynthesis bifunctional protein HisIE from Vibrio parahaemolyticus serotype O3:K6 (strain RIMD 2210633).